The chain runs to 68 residues: UPF0435 protein Sca_1453 (68 aa).

It belongs to the UPF0435 family.

This is UPF0435 protein Sca_1453 from Staphylococcus carnosus (strain TM300).